The primary structure comprises 47 residues: MKKVPLTCDVCGSRNYNVPKQSNLTSRLTLKKFCSRCNAHTMHKESK.

It belongs to the bacterial ribosomal protein bL33 family.

The polypeptide is Large ribosomal subunit protein bL33 (Staphylococcus xylosus).